Consider the following 158-residue polypeptide: C-type lectin lectoxin-Enh4 (158 aa).

The signal sequence occupies residues 1–23 (MGQFTVVSLGLLAMFLSLSGAKG). 3 cysteine pairs are disulfide-bonded: C26-C37, C54-C154, and C129-C146. The C-type lectin domain occupies 33–155 (RNGVCNKLFP…CASLHPFICQ (123 aa)). A Mannose-binding motif is present at residues 119–121 (EPN). Ca(2+) contacts are provided by E127, N142, and D143.

Belongs to the true venom lectin family. Expressed by the venom gland.

It localises to the secreted. Mannose-binding lectin which recognizes specific carbohydrate structures and agglutinates a variety of animal cells by binding to cell-surface glycoproteins and glycolipids. May be a calcium-dependent lectin. The protein is C-type lectin lectoxin-Enh4 of Pseudoferania polylepis (Macleay's water snake).